We begin with the raw amino-acid sequence, 305 residues long: tRNA dimethylallyltransferase (305 aa).

8-15 is an ATP binding site; the sequence is GPTAVGKT. 10-15 is a substrate binding site; the sequence is TAVGKT. Positions 33–36 are interaction with substrate tRNA; that stretch reads DSRQ.

This sequence belongs to the IPP transferase family. Monomer. It depends on Mg(2+) as a cofactor.

The catalysed reaction is adenosine(37) in tRNA + dimethylallyl diphosphate = N(6)-dimethylallyladenosine(37) in tRNA + diphosphate. Functionally, catalyzes the transfer of a dimethylallyl group onto the adenine at position 37 in tRNAs that read codons beginning with uridine, leading to the formation of N6-(dimethylallyl)adenosine (i(6)A). The sequence is that of tRNA dimethylallyltransferase from Thermotoga sp. (strain RQ2).